The primary structure comprises 156 residues: Small ribosomal subunit protein uS7 (156 aa).

It belongs to the universal ribosomal protein uS7 family. In terms of assembly, part of the 30S ribosomal subunit. Contacts proteins S9 and S11.

In terms of biological role, one of the primary rRNA binding proteins, it binds directly to 16S rRNA where it nucleates assembly of the head domain of the 30S subunit. Is located at the subunit interface close to the decoding center, probably blocks exit of the E-site tRNA. The protein is Small ribosomal subunit protein uS7 of Clostridium kluyveri (strain NBRC 12016).